Reading from the N-terminus, the 257-residue chain is Ribonuclease HII (257 aa).

The RNase H type-2 domain maps to glutamate 70 to asparagine 257. A divalent metal cation contacts are provided by aspartate 76, glutamate 77, and aspartate 168.

It belongs to the RNase HII family. The cofactor is Mn(2+). Mg(2+) is required as a cofactor.

The protein localises to the cytoplasm. It carries out the reaction Endonucleolytic cleavage to 5'-phosphomonoester.. Functionally, endonuclease that specifically degrades the RNA of RNA-DNA hybrids. The protein is Ribonuclease HII of Streptococcus suis (strain 98HAH33).